Consider the following 391-residue polypeptide: Succinate--CoA ligase [ADP-forming] subunit beta (391 aa).

Positions 9–245 (KQIFAEYGVP…LSEEDPDEVE (237 aa)) constitute an ATP-grasp domain. ATP contacts are provided by residues K46, 53-55 (GRG), E99, A102, and E107. Residues N200 and D214 each coordinate Mg(2+). Residues N265 and 322-324 (GIV) contribute to the substrate site.

Belongs to the succinate/malate CoA ligase beta subunit family. In terms of assembly, heterotetramer of two alpha and two beta subunits. It depends on Mg(2+) as a cofactor.

The catalysed reaction is succinate + ATP + CoA = succinyl-CoA + ADP + phosphate. The enzyme catalyses GTP + succinate + CoA = succinyl-CoA + GDP + phosphate. It participates in carbohydrate metabolism; tricarboxylic acid cycle; succinate from succinyl-CoA (ligase route): step 1/1. In terms of biological role, succinyl-CoA synthetase functions in the citric acid cycle (TCA), coupling the hydrolysis of succinyl-CoA to the synthesis of either ATP or GTP and thus represents the only step of substrate-level phosphorylation in the TCA. The beta subunit provides nucleotide specificity of the enzyme and binds the substrate succinate, while the binding sites for coenzyme A and phosphate are found in the alpha subunit. The polypeptide is Succinate--CoA ligase [ADP-forming] subunit beta (Sulfurovum sp. (strain NBC37-1)).